The primary structure comprises 650 residues: Macrolide export ATP-binding/permease protein MacB (650 aa).

The region spanning 9 to 248 (IELIDLERVF…RPLGRPPGGA (240 aa)) is the ABC transporter domain. 45–52 (GQSGSGKS) contributes to the ATP binding site. The next 4 membrane-spanning stretches (helical) occupy residues 276-296 (ALTL…MAIG), 525-545 (LTLL…IGVM), 580-600 (AVAV…GAAL), and 615-635 (PPIV…YLPA).

Belongs to the ABC transporter superfamily. Macrolide exporter (TC 3.A.1.122) family. As to quaternary structure, homodimer.

It is found in the cell inner membrane. Functionally, non-canonical ABC transporter that contains transmembrane domains (TMD), which form a pore in the inner membrane, and an ATP-binding domain (NBD), which is responsible for energy generation. Confers resistance against macrolides. This Rhodospirillum rubrum (strain ATCC 11170 / ATH 1.1.1 / DSM 467 / LMG 4362 / NCIMB 8255 / S1) protein is Macrolide export ATP-binding/permease protein MacB.